Reading from the N-terminus, the 370-residue chain is Gibberellin 2-beta-dioxygenase 2 (370 aa).

The 121-residue stretch at 186-306 folds into the Fe2OG dioxygenase domain; sequence DNDSLIRINH…RLSTIYFAAP (121 aa). Y196 lines the 2-oxoglutarate pocket. 3 residues coordinate Fe cation: H224, D226, and H287. 2-oxoglutarate-binding residues include R297 and S299.

The protein belongs to the iron/ascorbate-dependent oxidoreductase family. GA2OX subfamily. Requires Fe(2+) as cofactor.

The catalysed reaction is gibberellin A1 + 2-oxoglutarate + O2 = gibberellin A8 + succinate + CO2. Functionally, catalyzes the 2-beta-hydroxylation of several biologically active gibberellins, leading to the homeostatic regulation of their endogenous level. Catabolism of gibberellins (GAs) plays a central role in plant development. The sequence is that of Gibberellin 2-beta-dioxygenase 2 from Oryza sativa subsp. japonica (Rice).